A 258-amino-acid polypeptide reads, in one-letter code: Ditrans,polycis-undecaprenyl-diphosphate synthase ((2E,6E)-farnesyl-diphosphate specific) (258 aa).

Aspartate 24 is a catalytic residue. Aspartate 24 serves as a coordination point for Mg(2+). Substrate is bound by residues 25-28 (GNGR), tryptophan 29, arginine 37, histidine 41, and 69-71 (SSE). The Proton acceptor role is filled by asparagine 72. Residues tryptophan 73, arginine 75, arginine 192, and 198–200 (RIS) each bind substrate. Glutamate 211 contacts Mg(2+).

The protein belongs to the UPP synthase family. As to quaternary structure, homodimer. Mg(2+) is required as a cofactor.

It catalyses the reaction 8 isopentenyl diphosphate + (2E,6E)-farnesyl diphosphate = di-trans,octa-cis-undecaprenyl diphosphate + 8 diphosphate. Functionally, catalyzes the sequential condensation of isopentenyl diphosphate (IPP) with (2E,6E)-farnesyl diphosphate (E,E-FPP) to yield (2Z,6Z,10Z,14Z,18Z,22Z,26Z,30Z,34E,38E)-undecaprenyl diphosphate (di-trans,octa-cis-UPP). UPP is the precursor of glycosyl carrier lipid in the biosynthesis of bacterial cell wall polysaccharide components such as peptidoglycan and lipopolysaccharide. The polypeptide is Ditrans,polycis-undecaprenyl-diphosphate synthase ((2E,6E)-farnesyl-diphosphate specific) (Xanthomonas campestris pv. campestris (strain ATCC 33913 / DSM 3586 / NCPPB 528 / LMG 568 / P 25)).